A 978-amino-acid polypeptide reads, in one-letter code: Retinoblastoma-related protein 2 (978 aa).

A domain A region spans residues Thr385–Leu585. Residues Thr385–Pro832 form a pocket region. The segment at Val586 to Val704 is spacer. A disordered region spans residues Gln616 to Pro645. Positions Val705–Pro832 are domain B. 2 disordered regions span residues Ser841–His878 and Val947–Ser978. Over residues Thr850 to Ser864 the composition is skewed to polar residues. Low complexity predominate over residues Ser958–Ser971.

It belongs to the retinoblastoma protein (RB) family.

The protein localises to the nucleus. Regulator of biological processes that recruits a histone deacetylase to control gene transcription. May play a role in the entry into mitosis, negatively regulating the cell proliferation. Formation of stable complexes with geminiviridae replication-associated proteins may create a cellular environment which favors viral DNA replication. In Oryza sativa subsp. japonica (Rice), this protein is Retinoblastoma-related protein 2 (RBR2).